Here is a 259-residue protein sequence, read N- to C-terminus: Major cell-binding factor (259 aa).

Positions 1–26 are cleaved as a signal peptide; the sequence is MVFRKSLLKLAVFALGACVAFSNANA.

This sequence belongs to the bacterial solute-binding protein 3 family.

It is found in the cell surface. Functionally, common antigen and a major cell adherence molecule. Most probably involved, with PEB1C, in a binding-protein-dependent transport system for an amino acid. May be involved in binding to intestinal cells. The polypeptide is Major cell-binding factor (peb1A) (Campylobacter jejuni subsp. jejuni serotype O:2 (strain ATCC 700819 / NCTC 11168)).